The sequence spans 156 residues: Endoribonuclease YbeY (156 aa).

H122, H126, and H132 together coordinate Zn(2+).

Belongs to the endoribonuclease YbeY family. It depends on Zn(2+) as a cofactor.

It localises to the cytoplasm. In terms of biological role, single strand-specific metallo-endoribonuclease involved in late-stage 70S ribosome quality control and in maturation of the 3' terminus of the 16S rRNA. This chain is Endoribonuclease YbeY, found in Bacillus cereus (strain B4264).